We begin with the raw amino-acid sequence, 301 residues long: MKYTIISGPTAVGKTDLIIEISTKIGAQIISLDSRQIYKLMDIGTAKPTKEEQQKVKHHLIDHIYPDEYYNAFYFRQDALKLRKQLTKKGIIPLFVGGTGLYIDALVKGFFEGAPKDENIRKHLNKLEKKEPGTLRTMLQKYDPEYALKIHPSDMKRTIRALEVFFKTGKKISELQSQTKISNKYKIIVLTRNRQELYERINTRVEKMIKAGLIDEVEKLLELYPKDINAFQTIGYKELIHYFENKYDLKTAIHLIKRNTRHFARRQLIWLRRYKNAIWINLSEISRRETIEKIEKIINEV.

Position 8 to 15 (8 to 15) interacts with ATP; it reads GPTAVGKT. Substrate is bound at residue 10–15; it reads TAVGKT. Residues 33-36 form an interaction with substrate tRNA region; that stretch reads DSRQ.

This sequence belongs to the IPP transferase family. Monomer. Mg(2+) is required as a cofactor.

The enzyme catalyses adenosine(37) in tRNA + dimethylallyl diphosphate = N(6)-dimethylallyladenosine(37) in tRNA + diphosphate. Its function is as follows. Catalyzes the transfer of a dimethylallyl group onto the adenine at position 37 in tRNAs that read codons beginning with uridine, leading to the formation of N6-(dimethylallyl)adenosine (i(6)A). This Thermosipho melanesiensis (strain DSM 12029 / CIP 104789 / BI429) protein is tRNA dimethylallyltransferase.